Reading from the N-terminus, the 382-residue chain is V-type proton ATPase subunit C 1 (382 aa).

T2 bears the N-acetylthreonine mark.

The protein belongs to the V-ATPase C subunit family. V-ATPase is a heteromultimeric enzyme made up of two complexes: the ATP-hydrolytic V1 complex and the proton translocation V0 complex. The V1 complex consists of three catalytic AB heterodimers that form a heterohexamer, three peripheral stalks each consisting of EG heterodimers, one central rotor including subunits D and F, and the regulatory subunits C and H. The proton translocation complex V0 consists of the proton transport subunit a, a ring of proteolipid subunits c9c'', rotary subunit d, subunits e and f, and the accessory subunits ATP6AP1/Ac45 and ATP6AP2/PRR. In terms of tissue distribution, expressed in brain (at protein level).

The protein localises to the cytoplasmic vesicle. The protein resides in the secretory vesicle. Its subcellular location is the synaptic vesicle membrane. It is found in the clathrin-coated vesicle membrane. Its function is as follows. Subunit of the V1 complex of vacuolar(H+)-ATPase (V-ATPase), a multisubunit enzyme composed of a peripheral complex (V1) that hydrolyzes ATP and a membrane integral complex (V0) that translocates protons. V-ATPase is responsible for acidifying and maintaining the pH of intracellular compartments and in some cell types, is targeted to the plasma membrane, where it is responsible for acidifying the extracellular environment. Subunit C is necessary for the assembly of the catalytic sector of the enzyme and is likely to have a specific function in its catalytic activity. The chain is V-type proton ATPase subunit C 1 (ATP6V1C1) from Bos taurus (Bovine).